Reading from the N-terminus, the 290-residue chain is MKISPNTISPSQSDPRMSTNVSQRSRVSGIGVPVSHSINNPSIQHVQDFATLSARSLRANVLLNSDDHSVPIHAKNPSELLEAIDNNISQTAQDWGVSIQEVEVILGSSKRIIEPVCGVTANTIMKLFLDNDIFSYSFEKGQSLSLSQLQERLASLPAHKNFILRVNDGGLGHAYVIDFPATTNPSRDAFLYQSDLGEGVTREVRFEDWMTQKASHPISLDDINTHFIGIAQDQIDLAHIAKLFDVDGNVKMLRADHLISHKTSEFNFQLFEYDLKNLENNMSIIKTHCN.

Positions methionine 1–arginine 26 are disordered. Residues cysteine 117, histidine 173, and glutamine 193 contribute to the active site.

This sequence belongs to the Cif family.

The protein resides in the secreted. It is found in the host nucleus. The enzyme catalyses L-glutaminyl-[protein] + H2O = L-glutamyl-[protein] + NH4(+). Its function is as follows. Protein-glutamine deamidase effector that inhibits the host cell cycle and other key cellular processes such as the actin network and programmed-cell death. Acts by mediating the side chain deamidation of 'Gln-40' of host NEDD8, converting it to glutamate, thereby abolishing the activity of cullin-RING-based E3 ubiquitin-protein ligase complexes (CRL complexes). Inactivation of CRL complexes prevents ubiquitination and subsequent degradation of the cyclin-dependent kinase inhibitors CDKN1A/p21 and CDKN1B/p27, leading to G1 and G2 cell cycle arrests in host cells. Also able to catalyze deamidation of 'Gln-40' of host ubiquitin in vitro; however, NEDD8 constitutes the preferred substrate in vivo. The protein is Protein-glutamine deamidase Cif of Yersinia pseudotuberculosis serotype O:3 (strain YPIII).